Consider the following 480-residue polypeptide: Coronin-2B (480 aa).

WD repeat units follow at residues 85-125 (GHQG…LKRN), 135-177 (GHSR…KMID), 179-217 (HRDVILCMSFNTDGSLLATTCKDKKLRVLEPRSGRVLQE), 220-263 (CKTH…MPVT), and 265-308 (EEID…PYLT). Residues 436 to 475 (NELLRMFFRQQEEIRRLKEQLSQRDLLVRQLELELKNLRN) adopt a coiled-coil conformation.

It belongs to the WD repeat coronin family.

It is found in the cytoplasm. The protein localises to the cytoskeleton. In terms of biological role, may play a role in the reorganization of neuronal actin structure. This chain is Coronin-2B (coro2b), found in Xenopus tropicalis (Western clawed frog).